Consider the following 958-residue polypeptide: MCCLFLRLRDYSTAHALSLPPCQRCGLQPWSARSHARRTLGVRKAGEMLRQEAASLSSSPRWTPSRRDAPCGRTLASASRPSTEGAMADRSSSSSSSPAPASAPGSSFGNKRSYAIHRAASSFPVGTSSSSARDTTYPHTFRTPLSAGNPQRSGHKSWTPQVGYSATSSAVSAHAPSVIVAVVEGRGLARGEIGMASIDLKSPQIMLSQFADNTTYAKVITKLQVLSPLEIIMSNTACVVGNSTKLFTLITENFKNVNFTTVQRKYFNETKGLEYIEQLCIAEFSSVLMEVQSRYYCLAAAAALLKYVEFIQNSVYAPKSLKIYFQGSEQTAMIDSSSAQNLELLVNNQDYRSNHTLFGVLNYTKTAGGSRRLRSNILEPLVDVETISMRLDCVQELLQDEELFFGLQSVISRFLDTEQLLSVLVQIPKQDTVNAAESKITNLIYLKHTLELVEPLKVTLKNCSTPLLRAYYGSLEDHRFGLILDKIKTVINDDARYMKGCLNMRTQKCYAVRSNISEFLDIARRTYTEIVDDIAGMIAQLAEKYSLPLRTSFSSSRGFFIQMTTDCAALSSDQLPSEFIKISKVKNSYSFTSADLIKMNERCQESLREIYHMTYMIVCKLLSEIYEHIHCLYKLSDTVSMLDMLLSFAHACTLSDYVRPEFTDTLAIKQGWHPILEKISAEKPVANNTYITEGSNVLIITGPNMSGKSTYLKQIALCQIMAQIGSYVPAEYASFRIAAQIFTRISTDDDIETNSSTFMKEMKEIAYILHNANDKSLILIDELGRGTNTEEGIGISYAVCEHLLSIKAFTLFTTHFLELCHLDALYLNVENMHFEVQHVKNTSRNKDAILYTYKLSRGLTEEKNYGLKAAEASSLPSSIVLDARDITTQITRQILQNQRSSPEMDRQRAVYHLATRLVQAARNSQLEPDRLRTYLSNLKKKYAGDFPRAVGLPEKTEE.

Disordered regions lie at residues 51 to 110 (QEAA…SFGN) and 124 to 161 (PVGT…WTPQ). The segment covering 91 to 107 (SSSSSSSPAPASAPGSS) has biased composition (low complexity). Polar residues-rich tracts occupy residues 124 to 138 (PVGT…TTYP) and 146 to 161 (SAGN…WTPQ). Residue 702 to 709 (GPNMSGKS) coordinates ATP.

It belongs to the DNA mismatch repair MutS family. As to quaternary structure, heterooligomer of MSH4 and MSH5. Predominantly expressed in testis.

It is found in the chromosome. Involved in meiotic recombination. Required for reciprocal recombination and proper segregation of homologous chromosomes at meiosis. This is MutS protein homolog 4 (Msh4) from Mus musculus (Mouse).